Reading from the N-terminus, the 249-residue chain is 2-dehydro-3-deoxy-L-rhamnonate dehydrogenase (NAD(+)) (249 aa).

The active-site Proton acceptor is Tyr156.

It belongs to the short-chain dehydrogenases/reductases (SDR) family. As to quaternary structure, homotetramer.

The catalysed reaction is 2-dehydro-3-deoxy-L-rhamnonate + NAD(+) = 2,4-didehydro-3-deoxy-L-rhamnonate + NADH + H(+). It participates in carbohydrate degradation; L-rhamnose degradation. Catalyzes the NAD(+)-dependent dehydrogenation of 2-dehydro-3-deoxy-L-rhamnonate to form 2,4-didehydro-3-deoxy-L-rhamnonate. Does not show any detectable activity in the presence of NADP(+). Catalyzes the fourth step in an alternative pathway for rhamnose utilization that does not involve phosphorylated intermediates. The polypeptide is 2-dehydro-3-deoxy-L-rhamnonate dehydrogenase (NAD(+)) (Sphingomonas sp. (strain SKA58)).